The primary structure comprises 1024 residues: Multidrug resistance protein MdtC (1024 aa).

The next 12 helical transmembrane spans lie at 3-23, 333-353, 360-380, 387-407, 431-451, 463-483, 528-548, 853-873, 875-895, 897-917, 953-973, and 984-1004; these read FLSL…ALVL, EVEQ…FAFL, LIPA…MYLC, LSLM…IVVL, VGFT…PLLM, FAIT…TLTP, WALL…ISMP, LWLI…LYES, VHPL…LLAL, LFNT…IGIV, PIIM…LSSG, and ITIV…TPVV.

Belongs to the resistance-nodulation-cell division (RND) (TC 2.A.6) family. MdtC subfamily. In terms of assembly, part of a tripartite efflux system composed of MdtA, MdtB and MdtC. MdtC forms a heteromultimer with MdtB.

It localises to the cell inner membrane. This chain is Multidrug resistance protein MdtC, found in Erwinia amylovora (strain ATCC 49946 / CCPPB 0273 / Ea273 / 27-3).